The chain runs to 359 residues: Cell division protein ZipA (359 aa).

The Periplasmic portion of the chain corresponds to 1 to 4 (MDLN). A helical membrane pass occupies residues 5-25 (TILIILGILALVALVAHGLWS). At 26–359 (NRREKSQYFE…AEEEYLAKIK (334 aa)) the chain is on the cytoplasmic side. Residues 78 to 101 (PPVQQPLNTEPEPITQETPVRAEP) form a disordered region.

Belongs to the ZipA family. In terms of assembly, interacts with FtsZ via their C-terminal domains.

It is found in the cell inner membrane. Essential cell division protein that stabilizes the FtsZ protofilaments by cross-linking them and that serves as a cytoplasmic membrane anchor for the Z ring. Also required for the recruitment to the septal ring of downstream cell division proteins. The protein is Cell division protein ZipA of Mannheimia succiniciproducens (strain KCTC 0769BP / MBEL55E).